The sequence spans 96 residues: Pterin-4-alpha-carbinolamine dehydratase (96 aa).

Belongs to the pterin-4-alpha-carbinolamine dehydratase family.

The protein localises to the spore wall. It catalyses the reaction (4aS,6R)-4a-hydroxy-L-erythro-5,6,7,8-tetrahydrobiopterin = (6R)-L-erythro-6,7-dihydrobiopterin + H2O. Has a role in spore wall formation. The polypeptide is Pterin-4-alpha-carbinolamine dehydratase (omt2) (Schizosaccharomyces pombe (strain 972 / ATCC 24843) (Fission yeast)).